We begin with the raw amino-acid sequence, 270 residues long: uncharacterized protein (270 aa).

The segment covering 22 to 31 (EAPQRTEASR) has biased composition (basic and acidic residues). The interval 22-42 (EAPQRTEASRTHPSPFLALPG) is disordered.

This is an uncharacterized protein from Homo sapiens (Human).